The following is a 420-amino-acid chain: Synaptosomal-associated protein 47 (420 aa).

T-SNARE coiled-coil homology domains follow at residues 110-172 and 357-419; these read AEAA…LTEL and TSEP…MKKL. The interval 338–357 is disordered; that stretch reads ATHCEPSSGSQEGRPLQLQT. Over residues 342-357 the composition is skewed to polar residues; it reads EPSSGSQEGRPLQLQT.

The protein belongs to the SVAP1 family. Forms a complex containing SNAP47, VAMP2 and STX1A. Associates with the BLOC-1 complex. Interacts with BLOC1S6.

It localises to the endomembrane system. The protein localises to the cytoplasm. The protein resides in the perinuclear region. Its function is as follows. May play a role in intracellular membrane fusion. The protein is Synaptosomal-associated protein 47 (SNAP47) of Bos taurus (Bovine).